Here is a 204-residue protein sequence, read N- to C-terminus: N-(5'-phosphoribosyl)anthranilate isomerase (204 aa).

It belongs to the TrpF family.

The enzyme catalyses N-(5-phospho-beta-D-ribosyl)anthranilate = 1-(2-carboxyphenylamino)-1-deoxy-D-ribulose 5-phosphate. Its pathway is amino-acid biosynthesis; L-tryptophan biosynthesis; L-tryptophan from chorismate: step 3/5. This is N-(5'-phosphoribosyl)anthranilate isomerase from Bacillus cereus (strain AH187).